The primary structure comprises 414 residues: Gamma-glutamyl phosphate reductase (414 aa).

This sequence belongs to the gamma-glutamyl phosphate reductase family.

The protein resides in the cytoplasm. The catalysed reaction is L-glutamate 5-semialdehyde + phosphate + NADP(+) = L-glutamyl 5-phosphate + NADPH + H(+). Its pathway is amino-acid biosynthesis; L-proline biosynthesis; L-glutamate 5-semialdehyde from L-glutamate: step 2/2. Catalyzes the NADPH-dependent reduction of L-glutamate 5-phosphate into L-glutamate 5-semialdehyde and phosphate. The product spontaneously undergoes cyclization to form 1-pyrroline-5-carboxylate. The protein is Gamma-glutamyl phosphate reductase of Caldanaerobacter subterraneus subsp. tengcongensis (strain DSM 15242 / JCM 11007 / NBRC 100824 / MB4) (Thermoanaerobacter tengcongensis).